Here is a 521-residue protein sequence, read N- to C-terminus: GMP synthase [glutamine-hydrolyzing] (521 aa).

In terms of domain architecture, Glutamine amidotransferase type-1 spans 5–203 (KILILDFGSQ…VHEICGCGRD (199 aa)). Residue C82 is the Nucleophile of the active site. Catalysis depends on residues H177 and E179. Residues 204 to 396 (WNMPDYVNEA…LGLPHEMVYR (193 aa)) form the GMPS ATP-PPase domain. 231–237 (SGGVDSS) contacts ATP.

Homodimer.

It carries out the reaction XMP + L-glutamine + ATP + H2O = GMP + L-glutamate + AMP + diphosphate + 2 H(+). It participates in purine metabolism; GMP biosynthesis; GMP from XMP (L-Gln route): step 1/1. Catalyzes the synthesis of GMP from XMP. This Aromatoleum aromaticum (strain DSM 19018 / LMG 30748 / EbN1) (Azoarcus sp. (strain EbN1)) protein is GMP synthase [glutamine-hydrolyzing].